The chain runs to 438 residues: SPbeta prophage-derived uncharacterized protein YopA (438 aa).

The chain crosses the membrane as a helical span at residues 391–411 (LHVLYLGVWYLELLTLGILGY).

Its subcellular location is the cell membrane. In Bacillus subtilis (strain 168), this protein is SPbeta prophage-derived uncharacterized protein YopA (yopA).